A 356-amino-acid polypeptide reads, in one-letter code: Mitogen-activated protein kinase PMK11 (356 aa).

The 289-residue stretch at Y24 to L312 folds into the Protein kinase domain. ATP is bound by residues V30 to V38 and K53.

This sequence belongs to the protein kinase superfamily. CMGC Ser/Thr protein kinase family. MAP kinase subfamily. It depends on Mg(2+) as a cofactor. Post-translationally, phosphorylated by MST7.

The catalysed reaction is L-seryl-[protein] + ATP = O-phospho-L-seryl-[protein] + ADP + H(+). It catalyses the reaction L-threonyl-[protein] + ATP = O-phospho-L-threonyl-[protein] + ADP + H(+). Functionally, mitogen-activated protein kinase; part of the MST11-MST7-PMK1 MAP kinase (MAPK) cascade that is essential for appressorium formation, penetration and invasive growth. Central regulator of appressorium development that acts downstream of the cAMP signal. The MST11-MST7-PMK1 MAP kinase cascade transduces signals from the cell surface sensors MDB2 and SHO1 that recognize various surface signals such as surface hydrophobicity, cutin monomers, and rice leaf waxes. Regulates expression of secreted fungal effector proteins implicated of host immune defenses, preventing reactive oxygen species generation and excessive callose deposition at plasmodesmata. Furthermore, controls the hyphal constriction required for fungal growth from one rice cell to the neighboring cell, enabling host tissue colonization and blast disease. Targets downstream of the PMK1-MAPK pathway include transcription factor MST12 and pathogenicity-related genes GAS1 and GAS2, both of which are expressed during appressorium formation, even if regulation of MST12 is not associated with expression of GAS1 or GAS2. This chain is Mitogen-activated protein kinase PMK11, found in Pyricularia oryzae (strain 70-15 / ATCC MYA-4617 / FGSC 8958) (Rice blast fungus).